We begin with the raw amino-acid sequence, 290 residues long: Agmatinase (290 aa).

Histidine 112, aspartate 135, histidine 137, aspartate 139, aspartate 216, and aspartate 218 together coordinate Mn(2+).

It belongs to the arginase family. Agmatinase subfamily. It depends on Mn(2+) as a cofactor.

It carries out the reaction agmatine + H2O = urea + putrescine. It participates in amine and polyamine biosynthesis; putrescine biosynthesis via agmatine pathway; putrescine from agmatine: step 1/1. Functionally, catalyzes the formation of putrescine from agmatine. This Bacillus cereus (strain ATCC 14579 / DSM 31 / CCUG 7414 / JCM 2152 / NBRC 15305 / NCIMB 9373 / NCTC 2599 / NRRL B-3711) protein is Agmatinase (speB).